Consider the following 255-residue polypeptide: 4-hydroxy-tetrahydrodipicolinate reductase (255 aa).

NAD(+)-binding positions include 9-14 (GFKGKM), aspartate 35, 89-91 (GTT), and 115-118 (APNF). Histidine 145 (proton donor/acceptor) is an active-site residue. (S)-2,3,4,5-tetrahydrodipicolinate is bound at residue histidine 146. Lysine 149 (proton donor) is an active-site residue. 155 to 156 (GT) lines the (S)-2,3,4,5-tetrahydrodipicolinate pocket.

It belongs to the DapB family.

Its subcellular location is the cytoplasm. It catalyses the reaction (S)-2,3,4,5-tetrahydrodipicolinate + NAD(+) + H2O = (2S,4S)-4-hydroxy-2,3,4,5-tetrahydrodipicolinate + NADH + H(+). The catalysed reaction is (S)-2,3,4,5-tetrahydrodipicolinate + NADP(+) + H2O = (2S,4S)-4-hydroxy-2,3,4,5-tetrahydrodipicolinate + NADPH + H(+). The protein operates within amino-acid biosynthesis; L-lysine biosynthesis via DAP pathway; (S)-tetrahydrodipicolinate from L-aspartate: step 4/4. In terms of biological role, catalyzes the conversion of 4-hydroxy-tetrahydrodipicolinate (HTPA) to tetrahydrodipicolinate. In Streptococcus pneumoniae (strain P1031), this protein is 4-hydroxy-tetrahydrodipicolinate reductase.